Reading from the N-terminus, the 387-residue chain is 1-deoxy-D-xylulose 5-phosphate reductoisomerase (387 aa).

Threonine 10, glycine 11, serine 12, isoleucine 13, and asparagine 124 together coordinate NADPH. Residue lysine 125 participates in 1-deoxy-D-xylulose 5-phosphate binding. An NADPH-binding site is contributed by glutamate 126. Aspartate 150 lines the Mn(2+) pocket. Residues serine 151, glutamate 152, serine 176, and histidine 199 each contribute to the 1-deoxy-D-xylulose 5-phosphate site. Position 152 (glutamate 152) interacts with Mn(2+). Glycine 205 provides a ligand contact to NADPH. 1-deoxy-D-xylulose 5-phosphate contacts are provided by serine 212, asparagine 217, lysine 218, and glutamate 221. Glutamate 221 contacts Mn(2+).

It belongs to the DXR family. Mg(2+) is required as a cofactor. The cofactor is Mn(2+).

The catalysed reaction is 2-C-methyl-D-erythritol 4-phosphate + NADP(+) = 1-deoxy-D-xylulose 5-phosphate + NADPH + H(+). It functions in the pathway isoprenoid biosynthesis; isopentenyl diphosphate biosynthesis via DXP pathway; isopentenyl diphosphate from 1-deoxy-D-xylulose 5-phosphate: step 1/6. Catalyzes the NADPH-dependent rearrangement and reduction of 1-deoxy-D-xylulose-5-phosphate (DXP) to 2-C-methyl-D-erythritol 4-phosphate (MEP). The chain is 1-deoxy-D-xylulose 5-phosphate reductoisomerase from Clostridium beijerinckii (strain ATCC 51743 / NCIMB 8052) (Clostridium acetobutylicum).